The chain runs to 383 residues: G-protein coupled receptor E1 (383 aa).

Helical transmembrane passes span 13 to 35, 78 to 98, 109 to 129, 160 to 180, 190 to 210, 242 to 262, 279 to 299, 323 to 343, and 351 to 371; these read SSLA…TTIA, LYLL…IIVI, MLLL…PFWM, VFCI…AVTA, IVTC…EFFF, VIML…YVII, LIFV…IVLL, LITK…YAFV, and LYHF…PFLS. Cys-145 and Cys-222 are oxidised to a cystine.

Belongs to the G-protein coupled receptor 1 family.

Its subcellular location is the host membrane. The protein is G-protein coupled receptor E1 (E1) of Equine herpesvirus 2 (strain 86/87) (EHV-2).